The primary structure comprises 458 residues: Bifunctional protein GlmU (458 aa).

The segment at 1 to 230 is pyrophosphorylase; it reads MSLPTYSKLN…EWQVAGINSK (230 aa). UDP-N-acetyl-alpha-D-glucosamine is bound by residues 14–17, Lys28, Gln79, and 84–85; these read LAAG and GT. A Mg(2+)-binding site is contributed by Asp108. UDP-N-acetyl-alpha-D-glucosamine-binding residues include Gly141, Glu155, Asn170, and Asn228. Asn228 is a Mg(2+) binding site. Residues 231-251 are linker; the sequence is QDLAALERVYQGRYAARLLAK. An N-acetyltransferase region spans residues 252 to 458; it reads GVTLADPSRI…NWKRPEKVKK (207 aa). Residues Arg334 and Lys352 each contribute to the UDP-N-acetyl-alpha-D-glucosamine site. Residue His364 is the Proton acceptor of the active site. UDP-N-acetyl-alpha-D-glucosamine is bound by residues Tyr367 and Asn378. Acetyl-CoA contacts are provided by residues Ala381, 387-388, Ser406, Ala424, and Arg441; that span reads NY.

This sequence in the N-terminal section; belongs to the N-acetylglucosamine-1-phosphate uridyltransferase family. It in the C-terminal section; belongs to the transferase hexapeptide repeat family. In terms of assembly, homotrimer. Mg(2+) serves as cofactor.

It localises to the cytoplasm. The enzyme catalyses alpha-D-glucosamine 1-phosphate + acetyl-CoA = N-acetyl-alpha-D-glucosamine 1-phosphate + CoA + H(+). The catalysed reaction is N-acetyl-alpha-D-glucosamine 1-phosphate + UTP + H(+) = UDP-N-acetyl-alpha-D-glucosamine + diphosphate. The protein operates within nucleotide-sugar biosynthesis; UDP-N-acetyl-alpha-D-glucosamine biosynthesis; N-acetyl-alpha-D-glucosamine 1-phosphate from alpha-D-glucosamine 6-phosphate (route II): step 2/2. It participates in nucleotide-sugar biosynthesis; UDP-N-acetyl-alpha-D-glucosamine biosynthesis; UDP-N-acetyl-alpha-D-glucosamine from N-acetyl-alpha-D-glucosamine 1-phosphate: step 1/1. Its pathway is bacterial outer membrane biogenesis; LPS lipid A biosynthesis. Its function is as follows. Catalyzes the last two sequential reactions in the de novo biosynthetic pathway for UDP-N-acetylglucosamine (UDP-GlcNAc). The C-terminal domain catalyzes the transfer of acetyl group from acetyl coenzyme A to glucosamine-1-phosphate (GlcN-1-P) to produce N-acetylglucosamine-1-phosphate (GlcNAc-1-P), which is converted into UDP-GlcNAc by the transfer of uridine 5-monophosphate (from uridine 5-triphosphate), a reaction catalyzed by the N-terminal domain. This is Bifunctional protein GlmU from Methylobacillus flagellatus (strain ATCC 51484 / DSM 6875 / VKM B-1610 / KT).